Reading from the N-terminus, the 460-residue chain is UDP-N-acetylmuramoylalanine--D-glutamate ligase (460 aa).

Residue 120 to 126 (GSNGKTT) coordinates ATP.

Belongs to the MurCDEF family.

It localises to the cytoplasm. It carries out the reaction UDP-N-acetyl-alpha-D-muramoyl-L-alanine + D-glutamate + ATP = UDP-N-acetyl-alpha-D-muramoyl-L-alanyl-D-glutamate + ADP + phosphate + H(+). It participates in cell wall biogenesis; peptidoglycan biosynthesis. In terms of biological role, cell wall formation. Catalyzes the addition of glutamate to the nucleotide precursor UDP-N-acetylmuramoyl-L-alanine (UMA). This chain is UDP-N-acetylmuramoylalanine--D-glutamate ligase, found in Lactobacillus gasseri (strain ATCC 33323 / DSM 20243 / BCRC 14619 / CIP 102991 / JCM 1131 / KCTC 3163 / NCIMB 11718 / NCTC 13722 / AM63).